The chain runs to 257 residues: Type III pantothenate kinase (257 aa).

ATP is bound at residue 6-13; sequence DVGNTSTK. Residue 109–112 participates in substrate binding; sequence GADR. The active-site Proton acceptor is the Asp111. Residue Asp132 coordinates K(+). Thr135 contributes to the ATP binding site. Thr187 lines the substrate pocket.

It belongs to the type III pantothenate kinase family. In terms of assembly, homodimer. Requires NH4(+) as cofactor. The cofactor is K(+).

It localises to the cytoplasm. The enzyme catalyses (R)-pantothenate + ATP = (R)-4'-phosphopantothenate + ADP + H(+). Its pathway is cofactor biosynthesis; coenzyme A biosynthesis; CoA from (R)-pantothenate: step 1/5. In terms of biological role, catalyzes the phosphorylation of pantothenate (Pan), the first step in CoA biosynthesis. The protein is Type III pantothenate kinase of Anaplasma marginale (strain St. Maries).